The primary structure comprises 276 residues: Dermonecrotic toxin LlSicTox-alphaIV1i (276 aa).

His-5 is an active-site residue. Glu-25 and Asp-27 together coordinate Mg(2+). His-41 functions as the Nucleophile in the catalytic mechanism. Intrachain disulfides connect Cys-45–Cys-51 and Cys-47–Cys-193. Position 85 (Asp-85) interacts with Mg(2+).

It belongs to the arthropod phospholipase D family. Class II subfamily. Mg(2+) is required as a cofactor. As to expression, expressed by the venom gland.

It is found in the secreted. The catalysed reaction is an N-(acyl)-sphingosylphosphocholine = an N-(acyl)-sphingosyl-1,3-cyclic phosphate + choline. The enzyme catalyses an N-(acyl)-sphingosylphosphoethanolamine = an N-(acyl)-sphingosyl-1,3-cyclic phosphate + ethanolamine. It carries out the reaction a 1-acyl-sn-glycero-3-phosphocholine = a 1-acyl-sn-glycero-2,3-cyclic phosphate + choline. It catalyses the reaction a 1-acyl-sn-glycero-3-phosphoethanolamine = a 1-acyl-sn-glycero-2,3-cyclic phosphate + ethanolamine. Dermonecrotic toxins cleave the phosphodiester linkage between the phosphate and headgroup of certain phospholipids (sphingolipid and lysolipid substrates), forming an alcohol (often choline) and a cyclic phosphate. This toxin acts on sphingomyelin (SM). It may also act on ceramide phosphoethanolamine (CPE), lysophosphatidylcholine (LPC) and lysophosphatidylethanolamine (LPE), but not on lysophosphatidylserine (LPS), and lysophosphatidylglycerol (LPG). It acts by transphosphatidylation, releasing exclusively cyclic phosphate products as second products. Induces dermonecrosis, hemolysis, increased vascular permeability, edema, inflammatory response, and platelet aggregation. This Loxosceles laeta (South American recluse spider) protein is Dermonecrotic toxin LlSicTox-alphaIV1i.